Reading from the N-terminus, the 1909-residue chain is Nck-associated protein 5 (1909 aa).

Residues 71–253 (EKLIHELEEE…DLEQQNRTLS (183 aa)) are a coiled coil. Disordered regions lie at residues 351-370 (SSYT…SQNW), 736-819 (EEDT…LMEP), 855-997 (PLFE…KKPS), 1026-1469 (SSSF…APLS), 1486-1509 (KGQV…FASW), 1541-1592 (GFGN…RTPQ), 1725-1750 (FPLP…DAEP), and 1763-1885 (SMRA…DYGD). Over residues 736–748 (EEDTEKNIPKDNV) the composition is skewed to basic and acidic residues. Polar residues-rich tracts occupy residues 753 to 789 (RVST…SRSS), 950 to 965 (APSS…SETA), 981 to 990 (VISSNPATTE), and 1066 to 1084 (PRIS…SKSV). Composition is skewed to low complexity over residues 1110–1131 (SPSS…HNSP) and 1178–1187 (ASKSSVAVNK). Over residues 1241–1250 (DGRDGVDNRS) the composition is skewed to basic and acidic residues. A compositionally biased stretch (polar residues) spans 1300-1325 (QIITNTAERGNSLTRQNSSTESSPNK). Residues 1339–1366 (GRPSGHPSSGKGSLGSSGSFSSQHGSPS) show a composition bias toward low complexity. Positions 1428 to 1446 (PGRTQHPSTFETSSTSKLE) are enriched in polar residues. The span at 1454 to 1466 (ASATATDAVSSEA) shows a compositional bias: low complexity. Composition is skewed to basic and acidic residues over residues 1547–1560 (LKSE…KPEL) and 1567–1576 (ELIKDTKSAD). The segment covering 1869 to 1878 (YSASGGSNSD) has biased composition (polar residues).

Interacts with the SH3-containing region of the adapter protein NCK. In terms of tissue distribution, expressed in fetal and adult brain, leukocytes and fetal fibroblasts.

In Homo sapiens (Human), this protein is Nck-associated protein 5 (NCKAP5).